The sequence spans 910 residues: DNA mismatch repair protein MutS (910 aa).

The segment covering 1-11 (MEAKVEEKEPE) has biased composition (basic and acidic residues). Residues 1–21 (MEAKVEEKEPEPVENAGPDAP) form a disordered region. 658–665 (GPNMGGKS) is an ATP binding site.

Belongs to the DNA mismatch repair MutS family.

Functionally, this protein is involved in the repair of mismatches in DNA. It is possible that it carries out the mismatch recognition step. This protein has a weak ATPase activity. The chain is DNA mismatch repair protein MutS from Brucella abortus (strain 2308).